The following is a 221-amino-acid chain: Probable transaldolase (221 aa).

K83 serves as the catalytic Schiff-base intermediate with substrate.

This sequence belongs to the transaldolase family. Type 3B subfamily.

It is found in the cytoplasm. The catalysed reaction is D-sedoheptulose 7-phosphate + D-glyceraldehyde 3-phosphate = D-erythrose 4-phosphate + beta-D-fructose 6-phosphate. The protein operates within carbohydrate degradation; pentose phosphate pathway; D-glyceraldehyde 3-phosphate and beta-D-fructose 6-phosphate from D-ribose 5-phosphate and D-xylulose 5-phosphate (non-oxidative stage): step 2/3. Its function is as follows. Transaldolase is important for the balance of metabolites in the pentose-phosphate pathway. The chain is Probable transaldolase from Herpetosiphon aurantiacus (strain ATCC 23779 / DSM 785 / 114-95).